The primary structure comprises 343 residues: N-acetyl-gamma-glutamyl-phosphate reductase (343 aa).

Cys147 is an active-site residue.

The protein belongs to the NAGSA dehydrogenase family. Type 1 subfamily.

It localises to the cytoplasm. The enzyme catalyses N-acetyl-L-glutamate 5-semialdehyde + phosphate + NADP(+) = N-acetyl-L-glutamyl 5-phosphate + NADPH + H(+). Its pathway is amino-acid biosynthesis; L-arginine biosynthesis; N(2)-acetyl-L-ornithine from L-glutamate: step 3/4. Its function is as follows. Catalyzes the NADPH-dependent reduction of N-acetyl-5-glutamyl phosphate to yield N-acetyl-L-glutamate 5-semialdehyde. In Staphylococcus aureus (strain USA300), this protein is N-acetyl-gamma-glutamyl-phosphate reductase.